We begin with the raw amino-acid sequence, 186 residues long: Ribosome-recycling factor (186 aa).

The protein belongs to the RRF family.

The protein localises to the cytoplasm. Functionally, responsible for the release of ribosomes from messenger RNA at the termination of protein biosynthesis. May increase the efficiency of translation by recycling ribosomes from one round of translation to another. This chain is Ribosome-recycling factor, found in Herminiimonas arsenicoxydans.